Reading from the N-terminus, the 219-residue chain is Ribose-5-phosphate isomerase A (219 aa).

Residues 28-31 (TGST), 81-84 (DGAD), and 94-97 (KGGG) contribute to the substrate site. The active-site Proton acceptor is Glu-103. Position 121 (Lys-121) interacts with substrate.

The protein belongs to the ribose 5-phosphate isomerase family. Homodimer.

The catalysed reaction is aldehydo-D-ribose 5-phosphate = D-ribulose 5-phosphate. It participates in carbohydrate degradation; pentose phosphate pathway; D-ribose 5-phosphate from D-ribulose 5-phosphate (non-oxidative stage): step 1/1. Its function is as follows. Catalyzes the reversible conversion of ribose-5-phosphate to ribulose 5-phosphate. The protein is Ribose-5-phosphate isomerase A of Escherichia fergusonii (strain ATCC 35469 / DSM 13698 / CCUG 18766 / IAM 14443 / JCM 21226 / LMG 7866 / NBRC 102419 / NCTC 12128 / CDC 0568-73).